The primary structure comprises 364 residues: Cell division protein FtsZ 1 (364 aa).

GTP-binding positions include 47-48, 97-99, 134-136, Glu-165, Arg-169, and Asp-212; these read GA, AGG, and GTG.

Belongs to the FtsZ family. Homodimer. Polymerizes to form a dynamic ring structure in a strictly GTP-dependent manner. Interacts directly with several other division proteins.

It localises to the cytoplasm. In terms of biological role, essential cell division protein that forms a contractile ring structure (Z ring) at the future cell division site. The regulation of the ring assembly controls the timing and the location of cell division. One of the functions of the FtsZ ring is to recruit other cell division proteins to the septum to produce a new cell wall between the dividing cells. Binds GTP and shows GTPase activity. The polypeptide is Cell division protein FtsZ 1 (Methanocaldococcus jannaschii (strain ATCC 43067 / DSM 2661 / JAL-1 / JCM 10045 / NBRC 100440) (Methanococcus jannaschii)).